The chain runs to 246 residues: Protein phosphatase PhpP (246 aa).

Positions 2 to 240 (EISLLTDVGQ…DNITVALVSM (239 aa)) constitute a PPM-type phosphatase domain. 4 residues coordinate Mn(2+): Asp36, Gly37, Asp192, and Asp231.

The protein belongs to the PP2C family. Interacts with the kinase domain of StkP. The cofactor is Mn(2+).

The protein localises to the cytoplasm. The enzyme catalyses O-phospho-L-seryl-[protein] + H2O = L-seryl-[protein] + phosphate. It catalyses the reaction O-phospho-L-threonyl-[protein] + H2O = L-threonyl-[protein] + phosphate. With respect to regulation, phosphatase activity is inhibited by NaF but not by okadaic acid. Functionally, protein phosphatase able to dephosphorylate StkP-P and a phosphothreonine residue in a phosphopeptide synthetic substrate. PhpP and its cognate protein kinase StkP appear to constitute a functional signaling couple in vivo, PhpP's primary role probably being to control phosphorylation levels of StkP and of its targets (which include LocZ, DivIVA and KhpB (also called EloR/Jag)). PhpP thus performs an essential control of StkP activity. Overexpression confers an stkP deletion-like phenotype. This Streptococcus pneumoniae protein is Protein phosphatase PhpP (phpP).